The primary structure comprises 132 residues: Small ribosomal subunit protein bS16 (132 aa).

The span at 82–107 (DSKVQSKKEHNANKVKKEVKKPEAKK) shows a compositional bias: basic and acidic residues. The disordered stretch occupies residues 82 to 132 (DSKVQSKKEHNANKVKKEVKKPEAKKAAASKPASKPSASKSASQKKTVSKK). The span at 108-132 (AAASKPASKPSASKSASQKKTVSKK) shows a compositional bias: low complexity.

The protein belongs to the bacterial ribosomal protein bS16 family.

In Malacoplasma penetrans (strain HF-2) (Mycoplasma penetrans), this protein is Small ribosomal subunit protein bS16.